The sequence spans 95 residues: Small ribosomal subunit protein bS18 (95 aa).

It belongs to the bacterial ribosomal protein bS18 family. In terms of assembly, part of the 30S ribosomal subunit. Forms a tight heterodimer with protein bS6.

Binds as a heterodimer with protein bS6 to the central domain of the 16S rRNA, where it helps stabilize the platform of the 30S subunit. This Rickettsia akari (strain Hartford) protein is Small ribosomal subunit protein bS18.